A 365-amino-acid polypeptide reads, in one-letter code: DNA polymerase IV 1 (365 aa).

A UmuC domain is found at 6 to 196 (VLHIDMDYFF…LNVSKLWGIG (191 aa)). 2 residues coordinate Mg(2+): aspartate 10 and aspartate 113. Glutamate 114 is an active-site residue.

It belongs to the DNA polymerase type-Y family. As to quaternary structure, monomer. Requires Mg(2+) as cofactor.

The protein localises to the cytoplasm. It catalyses the reaction DNA(n) + a 2'-deoxyribonucleoside 5'-triphosphate = DNA(n+1) + diphosphate. Poorly processive, error-prone DNA polymerase involved in untargeted mutagenesis. Copies undamaged DNA at stalled replication forks, which arise in vivo from mismatched or misaligned primer ends. These misaligned primers can be extended by PolIV. Exhibits no 3'-5' exonuclease (proofreading) activity. May be involved in translesional synthesis. The polypeptide is DNA polymerase IV 1 (dbh1) (Methanosarcina mazei (strain ATCC BAA-159 / DSM 3647 / Goe1 / Go1 / JCM 11833 / OCM 88) (Methanosarcina frisia)).